The primary structure comprises 404 residues: Multidrug resistance protein MdtG (404 aa).

11 helical membrane-spanning segments follow: residues 19 to 39, 56 to 76, 90 to 110, 113 to 133, 144 to 164, 171 to 191, 222 to 242, 254 to 274, 288 to 308, 317 to 337, and 376 to 396; these read LGCF…PLYV, LVFS…GGLA, LGMA…QFLI, ALLG…ATQV, TLST…GLLA, PVFF…FFFI, LFVT…ILTL, IAFI…LSAP, ILIV…FVQT, FLLG…LVYN, and AVFC…WNSL.

Belongs to the major facilitator superfamily. DHA1 family. MdtG (TC 2.A.1.2.20) subfamily.

It localises to the cell inner membrane. The chain is Multidrug resistance protein MdtG from Salmonella typhimurium (strain LT2 / SGSC1412 / ATCC 700720).